The following is a 209-amino-acid chain: Guanylate kinase (209 aa).

The 180-residue stretch at 9-188 folds into the Guanylate kinase-like domain; that stretch reads GIMLVMSSPS…SVQQIKSIFI (180 aa). Residue 16-23 coordinates ATP; it reads SPSGGGKT.

It belongs to the guanylate kinase family.

The protein localises to the cytoplasm. The enzyme catalyses GMP + ATP = GDP + ADP. Functionally, essential for recycling GMP and indirectly, cGMP. This chain is Guanylate kinase, found in Ehrlichia ruminantium (strain Gardel).